A 341-amino-acid chain; its full sequence is D-aspartate oxidase (341 aa).

At methionine 1 the chain carries Blocked amino end (Met). Residues aspartate 36, lysine 37, threonine 43, serine 44, methionine 50, glycine 307, and isoleucine 311 each coordinate FAD. The Microbody targeting signal signature appears at 339–341; sequence SKL.

It belongs to the DAMOX/DASOX family. As to quaternary structure, monomer. Interacts with PEX5; the interaction is direct and required for localization of DDO to the peroxisome. FAD serves as cofactor. In the kidney, expressed in epithelial cells of the proximal tubules and in the liver (at protein level).

The protein resides in the peroxisome matrix. It localises to the cytoplasm. Its subcellular location is the cytosol. It carries out the reaction D-aspartate + O2 + H2O = oxaloacetate + H2O2 + NH4(+). It catalyses the reaction D-glutamate + O2 + H2O = H2O2 + 2-oxoglutarate + NH4(+). With respect to regulation, inhibited by phenylglyoxal; chemical modification of arginine residues in the enzyme with phenylglyoxal leads to the irreversible loss of activity towards dicarboxylic D-amino acids, paralleled by a transient appearance of activity versus monocarboxylic ones. Its function is as follows. Selectively catalyzes the oxidative deamination of acidic amino acids. Suppresses the level of D-aspartate in the brain, an amino acid that can act as an agonist for glutamate receptors. Protects the organism from the toxicity of D-amino acids. May also function in the intestine. The chain is D-aspartate oxidase (DDO) from Bos taurus (Bovine).